A 65-amino-acid chain; its full sequence is Metallothionein-like protein 3B (65 aa).

Belongs to the metallothionein superfamily. Type 15 family.

Metallothioneins have a high content of cysteine residues that bind various heavy metals. This chain is Metallothionein-like protein 3B (MT3B), found in Oryza sativa subsp. indica (Rice).